The chain runs to 488 residues: uncharacterized protein (488 aa).

It belongs to the IIV-6 467R family.

This is an uncharacterized protein from Invertebrate iridescent virus 3 (IIV-3).